Here is a 288-residue protein sequence, read N- to C-terminus: Syntaxin-1B (288 aa).

A compositionally biased stretch (basic and acidic residues) spans 1 to 13 (MKDRTQELRSAKD). A disordered region spans residues 1-20 (MKDRTQELRSAKDSDDEEEV). Topologically, residues 1 to 264 (MKDRTQELRS…KYQSKARRKK (264 aa)) are cytoplasmic. Phosphoserine is present on residues Ser-10 and Ser-14. Residues 29–104 (MDEFFEQVEE…IEQSIEQEEG (76 aa)) adopt a coiled-coil conformation. One can recognise a t-SNARE coiled-coil homology domain in the interval 191–253 (LNEIETRHNE…ERAVSDTKKA (63 aa)). Residues 265–288 (IMIIICCVVLGVVLASSIGGTLGL) form a helical; Anchor for type IV membrane protein membrane-spanning segment.

Belongs to the syntaxin family. Interacts with OTOF. Interacts with SYT6 and SYT8; the interaction is Ca(2+)-dependent. In terms of processing, phosphorylated by CK2.

It is found in the membrane. The protein resides in the nucleus. The protein localises to the cytoplasm. It localises to the cytoskeleton. Its subcellular location is the microtubule organizing center. It is found in the centrosome. The protein resides in the spindle. Its function is as follows. Potentially involved in docking of synaptic vesicles at presynaptic active zones. May mediate Ca(2+)-regulation of exocytosis acrosomal reaction in sperm. This chain is Syntaxin-1B (STX1B), found in Homo sapiens (Human).